The sequence spans 134 residues: Photosystem II lipoprotein Psb27 (134 aa).

Positions methionine 1–alanine 24 are cleaved as a signal peptide. Residue cysteine 25 is the site of N-palmitoyl cysteine attachment. Residue cysteine 25 is the site of S-diacylglycerol cysteine attachment.

Belongs to the Psb27 family. Monomer. Forms a complex with a monomeric, partially assembled PSII. This is probably the complex in which D1 is assembled and/or replaced. Present in 6-10% of PSII complexes; mostly in monomeric PSII. These PSII do not evolve oxygen, do not have an assembled calcium-manganese-oxide cluster. Psb27-containing PSII seem to be assembly intermediates; a wild-type strain includes the intrinsic membrane proteins, Psb27, Pbs28, substoichiometric amounts of PsbO and PsbQ but no PsbU or PsbV, while a ctpA deletion mutant includes the intrinsic membrane proteins (D1 as precursor), Psb27, a very low amount of PsbO and PsbQ, but no PsbU or PsbV. Small amounts of Psb27 interact with the lumenal domain of CP43 (psbC) in wild-type and a ctpA mutant. A small amount can also be detected in monomeric and trimeric photosystem I (PSI), possibly via association with PsaB.

Its subcellular location is the cellular thylakoid membrane. Its function is as follows. Plays a role in the repair and/or biogenesis of the calcium-manganese-oxide cluster on the lumenal face of the thylakoid membrane. Photosystem II (PSII) complexes containing this protein are monomeric, are assembly intermediates lacking the calcium-manganese-oxide cluster and miss some of the lumenal subunits. Probably blocks binding of some of the small lumenal subunits. The chain is Photosystem II lipoprotein Psb27 from Synechocystis sp. (strain ATCC 27184 / PCC 6803 / Kazusa).